A 326-amino-acid chain; its full sequence is Vitamin B12 import system permease protein BtuC (326 aa).

9 helical membrane passes run 17–39, 59–81, 88–107, 111–133, 146–168, 188–205, 242–264, 274–296, and 303–322; these read LSLS…QWIA, RTLA…QALF, PGLL…AVLL, QLPG…LILL, LLAG…YFST, WQQS…IWIC, MVGV…PHIL, VLLP…VARL, and LPIG…WLLL.

It belongs to the binding-protein-dependent transport system permease family. FecCD subfamily. The complex is composed of two ATP-binding proteins (BtuD), two transmembrane proteins (BtuC) and a solute-binding protein (BtuF).

It localises to the cell inner membrane. In terms of biological role, part of the ABC transporter complex BtuCDF involved in vitamin B12 import. Involved in the translocation of the substrate across the membrane. The chain is Vitamin B12 import system permease protein BtuC from Salmonella typhi.